The sequence spans 254 residues: uncharacterized protein (254 aa).

It belongs to the methyltransferase superfamily.

This is an uncharacterized protein from Mycobacterium bovis (strain ATCC BAA-935 / AF2122/97).